Consider the following 285-residue polypeptide: Chitinase 4 (285 aa).

An N-terminal signal peptide occupies residues 1 to 27 (MAAKMATMVALVFGLALLLSAAAPAAA). The Chitin-binding type-1 domain occupies 28–62 (QNCGCQDGYCCSQWGYCGTTEAYCGQGCQSGPCWG). Disulfide bonds link Cys30–Cys38, Cys32–Cys44, Cys37–Cys51, Cys55–Cys60, Cys104–Cys153, Cys166–Cys175, and Cys253–Cys285. Glu148 acts as the Proton donor in catalysis.

The protein belongs to the glycosyl hydrolase 19 family. Chitinase class IV subfamily. In terms of tissue distribution, expressed at low levels in leaves, sheaths and meristems.

It carries out the reaction Random endo-hydrolysis of N-acetyl-beta-D-glucosaminide (1-&gt;4)-beta-linkages in chitin and chitodextrins.. Its function is as follows. Hydrolyzes chitin and may function in reproductive organs during embryogenesis and seed maturation. The protein is Chitinase 4 (Cht4) of Oryza sativa subsp. japonica (Rice).